The sequence spans 382 residues: Mannitol-1-phosphate 5-dehydrogenase (382 aa).

Ala3 to Gly14 contributes to the NAD(+) binding site.

This sequence belongs to the mannitol dehydrogenase family.

The catalysed reaction is D-mannitol 1-phosphate + NAD(+) = beta-D-fructose 6-phosphate + NADH + H(+). The chain is Mannitol-1-phosphate 5-dehydrogenase from Salmonella typhi.